A 368-amino-acid chain; its full sequence is tRNA-specific 2-thiouridylase MnmA (368 aa).

ATP contacts are provided by residues 11–18 (GMSGGVDS) and methionine 37. The interaction with target base in tRNA stretch occupies residues 97–99 (NPD). Cysteine 102 (nucleophile) is an active-site residue. A disulfide bridge connects residues cysteine 102 and cysteine 199. Glycine 127 serves as a coordination point for ATP. The tract at residues 149–151 (KDQ) is interaction with tRNA. Cysteine 199 acts as the Cysteine persulfide intermediate in catalysis. The segment at 311 to 312 (RY) is interaction with tRNA.

It belongs to the MnmA/TRMU family. In terms of assembly, interacts with TusE.

It localises to the cytoplasm. It carries out the reaction S-sulfanyl-L-cysteinyl-[protein] + uridine(34) in tRNA + AH2 + ATP = 2-thiouridine(34) in tRNA + L-cysteinyl-[protein] + A + AMP + diphosphate + H(+). Functionally, catalyzes the 2-thiolation of uridine at the wobble position (U34) of tRNA(Lys), tRNA(Glu) and tRNA(Gln), leading to the formation of s(2)U34, the first step of tRNA-mnm(5)s(2)U34 synthesis. Sulfur is provided by IscS, via a sulfur-relay system. Binds ATP and its substrate tRNAs. This is tRNA-specific 2-thiouridylase MnmA from Escherichia coli O157:H7.